The following is a 432-amino-acid chain: Glutamate-1-semialdehyde 2,1-aminomutase (432 aa).

Lys-269 bears the N6-(pyridoxal phosphate)lysine mark.

This sequence belongs to the class-III pyridoxal-phosphate-dependent aminotransferase family. HemL subfamily. Homodimer. It depends on pyridoxal 5'-phosphate as a cofactor.

The protein resides in the cytoplasm. It catalyses the reaction (S)-4-amino-5-oxopentanoate = 5-aminolevulinate. It participates in porphyrin-containing compound metabolism; protoporphyrin-IX biosynthesis; 5-aminolevulinate from L-glutamyl-tRNA(Glu): step 2/2. This Desulforamulus reducens (strain ATCC BAA-1160 / DSM 100696 / MI-1) (Desulfotomaculum reducens) protein is Glutamate-1-semialdehyde 2,1-aminomutase.